Here is a 70-residue protein sequence, read N- to C-terminus: Eglin C (70 aa).

Belongs to the protease inhibitor I13 (potato type I serine protease inhibitor) family.

In terms of biological role, inhibits both elastase and cathepsin G. This Hirudo medicinalis (Medicinal leech) protein is Eglin C.